The following is a 192-amino-acid chain: EF-hand protein 5 (192 aa).

The interval 1-36 (MKDKAPVSSQQDHFSRGGAVGGKPISDVRGTSRPFY) is disordered. 4 consecutive EF-hand domains span residues 46–80 (AELA…GLHL), 81–118 (SDEE…EVDD), 119–154 (TMLE…GGEC), and 155–190 (STPE…HRLN). 5 residues coordinate Ca(2+): threonine 100, glutamate 102, aspartate 107, aspartate 132, and threonine 136.

This is EF-hand protein 5 from Trypanosoma brucei brucei.